A 211-amino-acid polypeptide reads, in one-letter code: 5-formyltetrahydrofolate cyclo-ligase (211 aa).

4–8 provides a ligand contact to ATP; it reads KQLLR. Substrate-binding positions include E56 and 152–156; that span reads HGAGY. ATP is bound by residues 151–158 and D194; that span reads GHGAGYYD.

It belongs to the 5-formyltetrahydrofolate cyclo-ligase family. In terms of processing, N-glycosylated.

It localises to the mitochondrion. The enzyme catalyses (6S)-5-formyl-5,6,7,8-tetrahydrofolate + ATP = (6R)-5,10-methenyltetrahydrofolate + ADP + phosphate. Its function is as follows. Only enzyme known to utilize 5-formyltetrahydrofolate (folinic acid) as substrate. Contributes to tetrahydrofolate metabolism in an alternative way of folate biosynthesis. May regulate carbon flow through the folate-dependent one-carbon metabolic network that supplies carbon for the biosynthesis of purines, thymidine and amino acids. The sequence is that of 5-formyltetrahydrofolate cyclo-ligase (FAU1) from Saccharomyces cerevisiae (strain ATCC 204508 / S288c) (Baker's yeast).